Here is a 279-residue protein sequence, read N- to C-terminus: MLIIELLKAIFFGIIEGITEWLPVSSTGHLILVQEFIRLNQDKAFIEMFNIVIQLGAIIAVMLIYFERLNPFQPGKTAREVQLTWQLWLKVVIACIPSILIAVPLDNWFEAHFYFMVPIAIALIVYGIAFIWIEKRNAQQEPAVTELARMSYKTAFFIGCFQVLSIVPGTSRSGATILGAIILGTSRTVAADFTFFLAIPTMFGYSGLKAVKFFLDGHHLDFAQVLILLVASLTAFVVSLLAIRFLTDYVKKHDFTIFGKYRIVLGSLLLIYSFFKFVF.

A run of 8 helical transmembrane segments spans residues 2–22, 44–64, 85–105, 113–133, 163–183, 188–208, 223–243, and 255–275; these read LIIE…TEWL, AFIE…VMLI, WQLW…AVPL, FYFM…FIWI, VLSI…AIIL, TVAA…YSGL, AQVL…LLAI, and FTIF…YSFF.

Belongs to the UppP family.

It is found in the cell membrane. It carries out the reaction di-trans,octa-cis-undecaprenyl diphosphate + H2O = di-trans,octa-cis-undecaprenyl phosphate + phosphate + H(+). Functionally, catalyzes the dephosphorylation of undecaprenyl diphosphate (UPP). Confers resistance to bacitracin. In Streptococcus pyogenes serotype M28 (strain MGAS6180), this protein is Undecaprenyl-diphosphatase.